The chain runs to 86 residues: Precursor of CEP4 (86 aa).

The N-terminal stretch at 1-30 (MVSRGCSITVLFRFLIVLLVIQVHFENTKA) is a signal peptide. Positions 31–64 (ARHAPVVSWSPPEPPKDDFVWYHKINRFKNIEQD) are excised as a propeptide. Positions 63-86 (QDAFRPTHQGPSQGIGHKNPPGAP) are disordered. 2 positions are modified to hydroxyproline: Pro-68 and Pro-73. The propeptide occupies 80-86 (KNPPGAP).

It belongs to the C-terminally encoded plant signaling peptide (CEP) family. As to quaternary structure, interacts with CEP receptors (e.g. CEPR1 and CEPR2). The mature small signaling peptide is generated by proteolytic processing of the longer precursor. In terms of tissue distribution, expressed at low levels in flowers. Present in lateral roots, shoot apical meristem (SAM), flowers and siliques.

The protein localises to the secreted. The protein resides in the extracellular space. It is found in the apoplast. Extracellular signaling peptide that represses primary root growth rate. Promotes shoot growth and modulates leaf morphology. Regulates systemic nitrogen (N)-demand signaling. Mediates up-regulation of genes involved in N uptake and assimilation pathways. This is Precursor of CEP4 from Arabidopsis thaliana (Mouse-ear cress).